Consider the following 242-residue polypeptide: Ubiquitin-conjugating enzyme E2 6 (242 aa).

Over methionine 1–asparagine 217 the chain is Cytoplasmic. A UBC core domain is found at glutamine 5 to arginine 163. The active-site Glycyl thioester intermediate is the cysteine 87. Residues serine 218–threonine 240 traverse the membrane as a helical segment.

The protein belongs to the ubiquitin-conjugating enzyme family.

The protein localises to the endoplasmic reticulum membrane. It catalyses the reaction S-ubiquitinyl-[E1 ubiquitin-activating enzyme]-L-cysteine + [E2 ubiquitin-conjugating enzyme]-L-cysteine = [E1 ubiquitin-activating enzyme]-L-cysteine + S-ubiquitinyl-[E2 ubiquitin-conjugating enzyme]-L-cysteine.. The protein operates within protein modification; protein ubiquitination. Its function is as follows. Catalyzes the covalent attachment of ubiquitin to other proteins. Functions in degradation of misfolded or regulated proteins localized in the endoplasmic reticulum (ER) lumen or membrane via the ubiquitin-proteasome system. Cognate E2 conjugating enzyme for the DOA10 ubiquitin ligase complex, which is part of the ERAD-C pathway responsible for the rapid degradation of membrane proteins with misfolded cytoplasmic domains. The polypeptide is Ubiquitin-conjugating enzyme E2 6 (UBC6) (Eremothecium gossypii (strain ATCC 10895 / CBS 109.51 / FGSC 9923 / NRRL Y-1056) (Yeast)).